Reading from the N-terminus, the 188-residue chain is RWD domain-containing protein 4 (188 aa).

The 103-residue stretch at 9-111 (MELEALRSIY…EYAKDHKEQF (103 aa)) folds into the RWD domain. The segment at 132–167 (TPTTAPSSKKKEKKEQLSKAQKRKLADKTDHKGELP) is disordered. Over residues 155 to 166 (KLADKTDHKGEL) the composition is skewed to basic and acidic residues.

In Mus musculus (Mouse), this protein is RWD domain-containing protein 4 (Rwdd4).